The sequence spans 169 residues: ATP synthase subunit b (169 aa).

A helical transmembrane segment spans residues 13-33 (LFLFQLINFLIIVFILKKFLF).

This sequence belongs to the ATPase B chain family. As to quaternary structure, F-type ATPases have 2 components, F(1) - the catalytic core - and F(0) - the membrane proton channel. F(1) has five subunits: alpha(3), beta(3), gamma(1), delta(1), epsilon(1). F(0) has three main subunits: a(1), b(2) and c(10-14). The alpha and beta chains form an alternating ring which encloses part of the gamma chain. F(1) is attached to F(0) by a central stalk formed by the gamma and epsilon chains, while a peripheral stalk is formed by the delta and b chains.

It is found in the cell inner membrane. Functionally, f(1)F(0) ATP synthase produces ATP from ADP in the presence of a proton or sodium gradient. F-type ATPases consist of two structural domains, F(1) containing the extramembraneous catalytic core and F(0) containing the membrane proton channel, linked together by a central stalk and a peripheral stalk. During catalysis, ATP synthesis in the catalytic domain of F(1) is coupled via a rotary mechanism of the central stalk subunits to proton translocation. Component of the F(0) channel, it forms part of the peripheral stalk, linking F(1) to F(0). The polypeptide is ATP synthase subunit b (Endomicrobium trichonymphae).